Consider the following 288-residue polypeptide: ATP phosphoribosyltransferase (288 aa).

Belongs to the ATP phosphoribosyltransferase family. Long subfamily. Mg(2+) is required as a cofactor.

The protein localises to the cytoplasm. It catalyses the reaction 1-(5-phospho-beta-D-ribosyl)-ATP + diphosphate = 5-phospho-alpha-D-ribose 1-diphosphate + ATP. Its pathway is amino-acid biosynthesis; L-histidine biosynthesis; L-histidine from 5-phospho-alpha-D-ribose 1-diphosphate: step 1/9. Feedback inhibited by histidine. Functionally, catalyzes the condensation of ATP and 5-phosphoribose 1-diphosphate to form N'-(5'-phosphoribosyl)-ATP (PR-ATP). Has a crucial role in the pathway because the rate of histidine biosynthesis seems to be controlled primarily by regulation of HisG enzymatic activity. This Methanococcus maripaludis (strain C5 / ATCC BAA-1333) protein is ATP phosphoribosyltransferase.